Consider the following 171-residue polypeptide: Acetyltransferase PA2271 (171 aa).

The region spanning 3-162 (YRIRTSRDED…HEQEIGFAAD (160 aa)) is the N-acetyltransferase domain. Residues 84-86 (LSI) and 128-130 (PFY) contribute to the CoA site.

Functionally, catalyzes the transfer of an acetyl group from acetyl coenzyme A (AcCoA) to an acceptor substrate and releases both CoA and the acetylated product. It can use a variety of substrates including spermidine, spermine and N(8)-acetylspermidine, 7-aminocephalosporanic acid, colistin and thiamine. The sequence is that of Acetyltransferase PA2271 from Pseudomonas aeruginosa (strain ATCC 15692 / DSM 22644 / CIP 104116 / JCM 14847 / LMG 12228 / 1C / PRS 101 / PAO1).